The sequence spans 431 residues: CCA tRNA nucleotidyltransferase 1, mitochondrial (431 aa).

The transit peptide at M1 to T31 directs the protein to the mitochondrion. The ATP site is built by G61 and R64. 2 residues coordinate CTP: G61 and R64. Mg(2+)-binding residues include D74 and D76. ATP is bound by residues R148, D191, R194, R197, and R200. Positions 148, 191, 194, 197, and 200 each coordinate CTP.

The protein belongs to the tRNA nucleotidyltransferase/poly(A) polymerase family. In terms of assembly, monomer, and homodimer. The cofactor is Mg(2+). Expressed ubiquitously during early embryogenesis.

It is found in the mitochondrion. It localises to the cytoplasm. The protein localises to the nucleus. The catalysed reaction is a tRNA precursor + 2 CTP + ATP = a tRNA with a 3' CCA end + 3 diphosphate. The enzyme catalyses a tRNA with a 3' CCA end + 2 CTP + ATP = a tRNA with a 3' CCACCA end + 3 diphosphate. Functionally, nucleotidyltransferase that catalyzes the addition and repair of the essential 3'-terminal CCA sequence in tRNAs, which is necessary for the attachment of amino acids to the 3' terminus of tRNA molecules, using CTP and ATP as substrates. tRNA 3'-terminal CCA addition is required both for tRNA processing and repair. Promotes tRNA repair and recycling downstream of the ribosome-associated quality control (RQC) pathway by mediating addition of the tRNA 3'-terminal CCA following cleavage by ankzf1 and repair by elac1. Also involved in tRNA surveillance by mediating tandem CCA addition to generate a CCACCA at the 3' terminus of unstable tRNAs and tRNA-like transcripts. While stable tRNAs receive only 3'-terminal CCA, unstable tRNAs beginning with GG are marked with CCACCA and rapidly degraded. The structural flexibility of RNA controls the choice between CCA versus CCACCA addition: following the first CCA addition cycle, nucleotide-binding to the active site triggers a clockwise screw motion, producing torque on the RNA. This ejects stable RNAs, whereas unstable RNAs are refolded while bound to the enzyme and subjected to a second CCA catalytic cycle. The chain is CCA tRNA nucleotidyltransferase 1, mitochondrial from Danio rerio (Zebrafish).